We begin with the raw amino-acid sequence, 159 residues long: Phosphopantetheine adenylyltransferase (159 aa).

A substrate-binding site is contributed by Thr-10. ATP-binding positions include 10–11 and His-18; that span reads TF. Substrate contacts are provided by Lys-42, Leu-74, and Arg-88. ATP-binding positions include 89-91, Glu-99, and 124-130; these read GLR and YAFISSS.

This sequence belongs to the bacterial CoaD family. As to quaternary structure, homohexamer. Mg(2+) serves as cofactor.

It is found in the cytoplasm. It carries out the reaction (R)-4'-phosphopantetheine + ATP + H(+) = 3'-dephospho-CoA + diphosphate. It functions in the pathway cofactor biosynthesis; coenzyme A biosynthesis; CoA from (R)-pantothenate: step 4/5. Its function is as follows. Reversibly transfers an adenylyl group from ATP to 4'-phosphopantetheine, yielding dephospho-CoA (dPCoA) and pyrophosphate. The polypeptide is Phosphopantetheine adenylyltransferase (Hydrogenovibrio crunogenus (strain DSM 25203 / XCL-2) (Thiomicrospira crunogena)).